Here is a 431-residue protein sequence, read N- to C-terminus: Enolase (431 aa).

Glutamine 166 is a (2R)-2-phosphoglycerate binding site. The active-site Proton donor is glutamate 208. Mg(2+) is bound by residues aspartate 245, glutamate 288, and aspartate 315. (2R)-2-phosphoglycerate-binding residues include lysine 340, arginine 369, serine 370, and lysine 391. Lysine 340 acts as the Proton acceptor in catalysis.

This sequence belongs to the enolase family. It depends on Mg(2+) as a cofactor.

It localises to the cytoplasm. Its subcellular location is the secreted. The protein localises to the cell surface. It catalyses the reaction (2R)-2-phosphoglycerate = phosphoenolpyruvate + H2O. The protein operates within carbohydrate degradation; glycolysis; pyruvate from D-glyceraldehyde 3-phosphate: step 4/5. Functionally, catalyzes the reversible conversion of 2-phosphoglycerate (2-PG) into phosphoenolpyruvate (PEP). It is essential for the degradation of carbohydrates via glycolysis. In Clostridium botulinum (strain Eklund 17B / Type B), this protein is Enolase.